A 155-amino-acid polypeptide reads, in one-letter code: Nucleosome assembly protein 1-like 5 (155 aa).

Basic and acidic residues predominate over residues M1 to D16. The interval M1 to L60 is disordered. The segment covering D27–A49 has biased composition (low complexity). Residues V68–K94 adopt a coiled-coil conformation. The segment at W119 to K155 is disordered. A compositionally biased stretch (acidic residues) spans E122–A142.

This sequence belongs to the nucleosome assembly protein (NAP) family.

The protein resides in the nucleus. This is Nucleosome assembly protein 1-like 5 (Nap1l5) from Rattus norvegicus (Rat).